The sequence spans 87 residues: Transcription factor ILI4 (87 aa).

The 54-residue stretch at 1 to 54 folds into the bHLH domain; that stretch reads MSSRRSSRSSVSEEEINELISKLQSLLPSSRRRGANQASTTKLLKETCSYIKSL.

Belongs to the bHLH protein family. Interacts with LO9-177. In terms of tissue distribution, expressed in phloem of leaf blades and sheaths, lamina joints, filaments before anthesis, vasculare bundles of the ovule, lemma and palea, and embryos.

It localises to the cytoplasm. Its function is as follows. Atypical and probable non DNA-binding bHLH transcription factor that acts as a positive regulator of brassinosteroid (BR) response. Controls lamina inclination by participating in two BR signaling pathways involving BRI1 and RGA1. Involved in the RLI1-dependent modulation of leaf inclination by promoting lamina joint cell elongation, especially in response to phosphate (Pi) availability. The sequence is that of Transcription factor ILI4 (ILI4) from Oryza sativa subsp. japonica (Rice).